The primary structure comprises 421 residues: Subtilisin-like protease 2 (421 aa).

The signal sequence occupies residues 1 to 16 (MQLLNFGLLLLPFVAG). A propeptide spanning residues 17–122 (DLAPQPEPLL…VHPDQHVYLA (106 aa)) is cleaved from the precursor. The region spanning 36–122 (QYIVTLKEGL…VHPDQHVYLA (87 aa)) is the Inhibitor I9 domain. The region spanning 131-421 (RWGLGYMSSK…ERKFTLPKYF (291 aa)) is the Peptidase S8 domain. Active-site charge relay system residues include Asp-169 and His-201. 3 N-linked (GlcNAc...) asparagine glycosylation sites follow: Asn-248, Asn-261, and Asn-348. Ser-357 acts as the Charge relay system in catalysis. Asn-388 carries an N-linked (GlcNAc...) asparagine glycan.

It belongs to the peptidase S8 family.

It localises to the secreted. Secreted subtilisin-like serine protease with keratinolytic activity that contributes to pathogenicity. This is Subtilisin-like protease 2 (SUB2) from Trichophyton tonsurans (Scalp ringworm fungus).